Reading from the N-terminus, the 721-residue chain is Polyribonucleotide nucleotidyltransferase (721 aa).

2 residues coordinate Mg(2+): aspartate 490 and aspartate 496. The KH domain maps to 557–618 (PRILTLKINP…EAVRQKIEGL (62 aa)). The S1 motif domain maps to 625–693 (GEEYEGTVVK…DRGKIDLIRP (69 aa)). The tract at residues 696 to 721 (EGKIAPREPRAARAGGDRGGRPPRRE) is disordered.

This sequence belongs to the polyribonucleotide nucleotidyltransferase family. The cofactor is Mg(2+).

It is found in the cytoplasm. The catalysed reaction is RNA(n+1) + phosphate = RNA(n) + a ribonucleoside 5'-diphosphate. Its function is as follows. Involved in mRNA degradation. Catalyzes the phosphorolysis of single-stranded polyribonucleotides processively in the 3'- to 5'-direction. The protein is Polyribonucleotide nucleotidyltransferase of Deinococcus geothermalis (strain DSM 11300 / CIP 105573 / AG-3a).